The chain runs to 195 residues: Imidazoleglycerol-phosphate dehydratase (195 aa).

It belongs to the imidazoleglycerol-phosphate dehydratase family.

It localises to the cytoplasm. It catalyses the reaction D-erythro-1-(imidazol-4-yl)glycerol 3-phosphate = 3-(imidazol-4-yl)-2-oxopropyl phosphate + H2O. The protein operates within amino-acid biosynthesis; L-histidine biosynthesis; L-histidine from 5-phospho-alpha-D-ribose 1-diphosphate: step 6/9. The polypeptide is Imidazoleglycerol-phosphate dehydratase (Cupriavidus metallidurans (strain ATCC 43123 / DSM 2839 / NBRC 102507 / CH34) (Ralstonia metallidurans)).